The sequence spans 369 residues: S-adenosylmethionine:tRNA ribosyltransferase-isomerase (369 aa).

It belongs to the QueA family. As to quaternary structure, monomer.

It localises to the cytoplasm. It catalyses the reaction 7-aminomethyl-7-carbaguanosine(34) in tRNA + S-adenosyl-L-methionine = epoxyqueuosine(34) in tRNA + adenine + L-methionine + 2 H(+). It functions in the pathway tRNA modification; tRNA-queuosine biosynthesis. Transfers and isomerizes the ribose moiety from AdoMet to the 7-aminomethyl group of 7-deazaguanine (preQ1-tRNA) to give epoxyqueuosine (oQ-tRNA). The protein is S-adenosylmethionine:tRNA ribosyltransferase-isomerase of Acaryochloris marina (strain MBIC 11017).